Consider the following 199-residue polypeptide: Recombination protein RecR (199 aa).

The C4-type zinc-finger motif lies at 57-72 (CAECRTFTEEEVCHIC). A Toprim domain is found at 81-176 (GQICVVESPA…EASRIAHGVP (96 aa)).

This sequence belongs to the RecR family.

Functionally, may play a role in DNA repair. It seems to be involved in an RecBC-independent recombinational process of DNA repair. It may act with RecF and RecO. In Vibrio parahaemolyticus serotype O3:K6 (strain RIMD 2210633), this protein is Recombination protein RecR.